Here is a 365-residue protein sequence, read N- to C-terminus: Peptide chain release factor 2 (365 aa).

Glutamine 252 is modified (N5-methylglutamine).

Belongs to the prokaryotic/mitochondrial release factor family. In terms of processing, methylated by PrmC. Methylation increases the termination efficiency of RF2.

It is found in the cytoplasm. Functionally, peptide chain release factor 2 directs the termination of translation in response to the peptide chain termination codons UGA and UAA. The protein is Peptide chain release factor 2 of Pseudoalteromonas translucida (strain TAC 125).